Reading from the N-terminus, the 380-residue chain is Histidinol-phosphate aminotransferase (380 aa).

K235 is subject to N6-(pyridoxal phosphate)lysine.

This sequence belongs to the class-II pyridoxal-phosphate-dependent aminotransferase family. Histidinol-phosphate aminotransferase subfamily. Homodimer. Pyridoxal 5'-phosphate is required as a cofactor.

It carries out the reaction L-histidinol phosphate + 2-oxoglutarate = 3-(imidazol-4-yl)-2-oxopropyl phosphate + L-glutamate. It participates in amino-acid biosynthesis; L-histidine biosynthesis; L-histidine from 5-phospho-alpha-D-ribose 1-diphosphate: step 7/9. The polypeptide is Histidinol-phosphate aminotransferase (Rhodococcus opacus (strain B4)).